Reading from the N-terminus, the 398-residue chain is NADH-quinone oxidoreductase subunit D (398 aa).

This sequence belongs to the complex I 49 kDa subunit family. In terms of assembly, NDH-1 is composed of 14 different subunits. Subunits NuoB, C, D, E, F, and G constitute the peripheral sector of the complex.

Its subcellular location is the cell inner membrane. The catalysed reaction is a quinone + NADH + 5 H(+)(in) = a quinol + NAD(+) + 4 H(+)(out). Its function is as follows. NDH-1 shuttles electrons from NADH, via FMN and iron-sulfur (Fe-S) centers, to quinones in the respiratory chain. The immediate electron acceptor for the enzyme in this species is believed to be ubiquinone. Couples the redox reaction to proton translocation (for every two electrons transferred, four hydrogen ions are translocated across the cytoplasmic membrane), and thus conserves the redox energy in a proton gradient. The sequence is that of NADH-quinone oxidoreductase subunit D from Anaplasma marginale (strain St. Maries).